The sequence spans 397 residues: Probable transport protein MmpL6 (397 aa).

5 consecutive transmembrane segments (helical) span residues 190–210 (YDLL…MMII), 214–234 (LVAA…SFGL), 242–262 (LLGI…LLAV), 293–313 (TGGV…SFVF), and 328–348 (LGLL…IAVL).

Belongs to the resistance-nodulation-cell division (RND) (TC 2.A.6) family. MmpL subfamily.

The protein resides in the cell membrane. This Mycobacterium tuberculosis (strain CDC 1551 / Oshkosh) protein is Probable transport protein MmpL6 (mmpL6).